Consider the following 349-residue polypeptide: Protein DMR6-LIKE OXYGENASE 1 (349 aa).

The 100-residue stretch at 197–296 (HAQHMAFNYY…RLSIPTFYFP (100 aa)) folds into the Fe2OG dioxygenase domain. Residue Tyr206 participates in 2-oxoglutarate binding. Residues His221, Asp223, and His277 each coordinate Fe cation. The 2-oxoglutarate site is built by Arg287 and Ser289.

The protein belongs to the iron/ascorbate-dependent oxidoreductase family. Requires L-ascorbate as cofactor. It depends on Fe(2+) as a cofactor.

The catalysed reaction is salicylate + NADH + O2 + H(+) = 2,3-dihydroxybenzoate + NAD(+) + H2O. Functionally, converts salicylic acid (SA) to both 2,3-dihydroxybenzoic acid (2,3-DHBA) and 2,5-DHBA in vitro but only 2,3-DHBA in vivo. Component of a negative feedback regulation system of SA levels during senescence. Regulates both onset and progression of leaf senescence. Negative regulator of defense against Hyaloperonospora arabidopsidis. In terms of biological role, (Microbial infection) Confers susceptibility to the downy mildew pathogen Hyaloperonospora arabidopsidis. This is Protein DMR6-LIKE OXYGENASE 1 from Arabidopsis thaliana (Mouse-ear cress).